The chain runs to 2183 residues: COPII coat assembly protein SEC16 (2183 aa).

Disordered stretches follow at residues 60–83, 102–198, 247–278, 358–608, 717–1071, 1541–1596, 1693–2044, and 2066–2183; these read TMAK…VAVP, SSTS…TVET, SKEE…TPSI, QADE…ITLS, STPN…SEFK, TPGY…GYER, PPSA…KKVY, and GDLP…IMNN. The segment covering 64 to 75 has biased composition (basic residues); it reads KNNKKSKAKAKK. The segment covering 102–134 has biased composition (low complexity); the sequence is SSTSASLSVPESAAATETTASTSPTSPVTNVSP. The segment covering 149–175 has biased composition (acidic residues); the sequence is PDDEEDIDEEEETGTEESAEAEAEPES. The segment covering 259–278 has biased composition (low complexity); that stretch reads VATSTTTDVATPVATATPSI. Composition is skewed to basic and acidic residues over residues 358–369, 387–405, and 429–451; these read QADEYRKVRDQL, EEAK…HEDD, and PETK…KTEP. Positions 717-732 are enriched in polar residues; that stretch reads STPNMYQPVSSQSTPS. Over residues 740–749 the composition is skewed to basic and acidic residues; the sequence is KRVDKNKSDA. Low complexity predominate over residues 781–791; that stretch reads PGLMPAFGAAP. 3 stretches are compositionally biased toward pro residues: residues 792–807, 815–824, and 906–916; these read GAPP…PPVA, APAPVQPPTT, and PYAPPSGPSAV. Composition is skewed to low complexity over residues 990 to 1008 and 1016 to 1043; these read VAAA…GTAS and PRVS…VAPA. A compositionally biased stretch (low complexity) spans 1697-1714; sequence PSASGASPYAPSASSFSP. The segment covering 1733-1746 has biased composition (acidic residues); sequence EEEETEAVDQEQEP. Over residues 1751–1766 the composition is skewed to basic and acidic residues; the sequence is SHLENENERYEQKSEP. The segment covering 1769–1785 has biased composition (pro residues); the sequence is EPMAHPPPAQKAPPAAP. Composition is skewed to low complexity over residues 1786-1804 and 1831-1846; these read PAQQ…ARKV and SAAA…SAYS. Acidic residues-rich tracts occupy residues 1890-1902 and 1934-1943; these read AEEE…ETEV and DAGDYGDDEG. Pro residues predominate over residues 1957–1966; sequence SNLPPVPLPG. Positions 1969–1986 are enriched in low complexity; sequence PATSAAPPASRYSAPTAA. Composition is skewed to basic and acidic residues over residues 2004-2022 and 2031-2044; these read AKKE…DGGK and KKGE…KKVY. Residues 2079–2104 are compositionally biased toward pro residues; sequence GPPPPPKAKKPAGPPAGGTPPPPSGG. Residues 2105-2117 show a composition bias toward low complexity; the sequence is APPVGASRGATPP. Over residues 2118 to 2130 the composition is skewed to pro residues; it reads VATPPAADTPPVP. Low complexity predominate over residues 2135–2146; the sequence is APRPAATGAPRP.

This sequence belongs to the SEC16 family.

The protein localises to the endoplasmic reticulum membrane. Functionally, involved in the initiation of assembly of the COPII coat required for the formation of transport vesicles from the endoplasmic reticulum (ER) and the selection of cargo molecules. Also involved in autophagy. This Yarrowia lipolytica (strain CLIB 122 / E 150) (Yeast) protein is COPII coat assembly protein SEC16 (SEC16).